Consider the following 475-residue polypeptide: 3-keto-steroid reductase ERG27 (475 aa).

Residues I32, I55, T59, and K65 each contribute to the NADP(+) site. Residues S249 and Y272 each act as proton donor in the active site. 4 residues coordinate NADP(+): Y272, K276, V324, and S326. K276 acts as the Lowers pKa of active site Tyr in catalysis.

It belongs to the short-chain dehydrogenases/reductases (SDR) family. ERG27 subfamily. As to quaternary structure, heterotetramer of ERG25, ERG26, ERG27 and ERG28. ERG28 acts as a scaffold to tether ERG27 and other 4,4-demethylation-related enzymes, forming a demethylation enzyme complex, in the endoplasmic reticulum.

It is found in the endoplasmic reticulum membrane. The protein localises to the lipid droplet. It participates in steroid metabolism; ergosterol biosynthesis. 3-keto-steroid reductase; part of the third module of ergosterol biosynthesis pathway that includes the late steps of the pathway. ERG27 is a catalytic component of the C-4 demethylation complex that catalyzes the conversion of 4,4-dimethylfecosterol into fecosterol via 4-methylfecosterol. The third module or late pathway involves the ergosterol synthesis itself through consecutive reactions that mainly occur in the endoplasmic reticulum (ER) membrane. Firstly, the squalene synthase ERG9 catalyzes the condensation of 2 farnesyl pyrophosphate moieties to form squalene, which is the precursor of all steroids. Squalene synthase is crucial for balancing the incorporation of farnesyl diphosphate (FPP) into sterol and nonsterol isoprene synthesis. Secondly, squalene is converted into lanosterol by the consecutive action of the squalene epoxidase ERG1 and the lanosterol synthase ERG7. Then, the delta(24)-sterol C-methyltransferase ERG6 methylates lanosterol at C-24 to produce eburicol. Eburicol is the substrate of the sterol 14-alpha demethylase encoded by CYP51A, CYP51B and CYP51C, to yield 4,4,24-trimethyl ergosta-8,14,24(28)-trienol. CYP51B encodes the enzyme primarily responsible for sterol 14-alpha-demethylation, and plays an essential role in ascospore formation. CYP51A encodes an additional sterol 14-alpha-demethylase, induced on ergosterol depletion and responsible for the intrinsic variation in azole sensitivity. The third CYP51 isoform, CYP51C, does not encode a sterol 14-alpha-demethylase, but is required for full virulence on host wheat ears. The C-14 reductase ERG24 then reduces the C14=C15 double bond which leads to 4,4-dimethylfecosterol. A sequence of further demethylations at C-4, involving the C-4 demethylation complex containing the C-4 methylsterol oxidases ERG25, the sterol-4-alpha-carboxylate 3-dehydrogenase ERG26 and the 3-keto-steroid reductase ERG27, leads to the production of fecosterol via 4-methylfecosterol. ERG28 has a role as a scaffold to help anchor ERG25, ERG26 and ERG27 to the endoplasmic reticulum. The C-8 sterol isomerase ERG2 then catalyzes the reaction which results in unsaturation at C-7 in the B ring of sterols and thus converts fecosterol to episterol. The sterol-C5-desaturases ERG3A and ERG3BB then catalyze the introduction of a C-5 double bond in the B ring to produce 5-dehydroepisterol. The C-22 sterol desaturases ERG5A and ERG5B further convert 5-dehydroepisterol into ergosta-5,7,22,24(28)-tetraen-3beta-ol by forming the C-22(23) double bond in the sterol side chain. Finally, ergosta-5,7,22,24(28)-tetraen-3beta-ol is substrate of the C-24(28) sterol reductase ERG4 to produce ergosterol. This is 3-keto-steroid reductase ERG27 from Gibberella zeae (strain ATCC MYA-4620 / CBS 123657 / FGSC 9075 / NRRL 31084 / PH-1) (Wheat head blight fungus).